The primary structure comprises 189 residues: dTTP/UTP pyrophosphatase (189 aa).

The Proton acceptor role is filled by aspartate 73.

Belongs to the Maf family. YhdE subfamily. A divalent metal cation serves as cofactor.

It is found in the cytoplasm. The catalysed reaction is dTTP + H2O = dTMP + diphosphate + H(+). The enzyme catalyses UTP + H2O = UMP + diphosphate + H(+). Nucleoside triphosphate pyrophosphatase that hydrolyzes dTTP and UTP. May have a dual role in cell division arrest and in preventing the incorporation of modified nucleotides into cellular nucleic acids. The sequence is that of dTTP/UTP pyrophosphatase from Vibrio parahaemolyticus serotype O3:K6 (strain RIMD 2210633).